Here is a 261-residue protein sequence, read N- to C-terminus: uncharacterized protein (261 aa).

Residue 22–46 participates in NADP(+) binding; the sequence is IVTGGNSGLGQAFAMALAKAGANIF. Position 153 (Ser-153) interacts with substrate. Tyr-166 (proton acceptor) is an active-site residue.

This sequence belongs to the short-chain dehydrogenases/reductases (SDR) family.

This is an uncharacterized protein from Escherichia coli (strain K12).